A 327-amino-acid polypeptide reads, in one-letter code: Phenylalanine--tRNA ligase alpha subunit (327 aa).

Mg(2+) is bound at residue Glu-252.

It belongs to the class-II aminoacyl-tRNA synthetase family. Phe-tRNA synthetase alpha subunit type 1 subfamily. In terms of assembly, tetramer of two alpha and two beta subunits. Mg(2+) serves as cofactor.

It is found in the cytoplasm. The catalysed reaction is tRNA(Phe) + L-phenylalanine + ATP = L-phenylalanyl-tRNA(Phe) + AMP + diphosphate + H(+). The polypeptide is Phenylalanine--tRNA ligase alpha subunit (Pectobacterium carotovorum subsp. carotovorum (strain PC1)).